Reading from the N-terminus, the 626-residue chain is Chaperone protein DnaK (626 aa).

The residue at position 197 (Thr197) is a Phosphothreonine; by autocatalysis. Low complexity predominate over residues 595–614; that stretch reads QNMAQQQQAQGGAQQQNQNK. Residues 595 to 626 form a disordered region; sequence QNMAQQQQAQGGAQQQNQNKGGDDDVIDAEVE.

It belongs to the heat shock protein 70 family.

Its function is as follows. Acts as a chaperone. The polypeptide is Chaperone protein DnaK (Nautilia profundicola (strain ATCC BAA-1463 / DSM 18972 / AmH)).